Consider the following 276-residue polypeptide: SKA complex subunit 1 homolog (276 aa).

A coiled-coil region spans residues 48–78 (VDVSLTAMEAQLQAVRRRLQEEREAFPKAKK).

The protein belongs to the SKA1 family.

The polypeptide is SKA complex subunit 1 homolog (Oryza sativa subsp. indica (Rice)).